A 473-amino-acid chain; its full sequence is Knob-associated histidine-rich protein (473 aa).

Positions 1–34 are cleaved as a signal peptide; sequence MKSFKNKNTLRRKKAFPVFTKILLVSFLVWVLKC. The N-linked (GlcNAc...) asparagine glycan is linked to asparagine 42. The span at 57-87 shows a compositional bias: basic residues; it reads AQKQHEHHHHHHHQHQHQHQAPHQAHHHHHH. 2 disordered regions span residues 57–143 and 347–473; these read AQKQ…QVFR and SSVN…DGSK. Over residues 95 to 104 the composition is skewed to low complexity; the sequence is PQVHQQVHGQ. Residues 108-117 are compositionally biased toward basic residues; the sequence is HHHHHHHHHQ. 2 stretches are compositionally biased toward basic and acidic residues: residues 354-375 and 396-405; these read KHGDEKHHSSKKHEGNDGEGEK and KDNEDAESVK. The span at 406-422 shows a compositional bias: basic residues; that stretch reads SKKHKSHDCEKKKSKKH. 2 stretches are compositionally biased toward basic and acidic residues: residues 423–444 and 453–473; these read KDNEDAESVKSKKSVKEKGEKH and KTNEENKNKEKTNNLKSDGSK.

It localises to the secreted. Functionally, KAHRP might mimick human histidine-rich glycoproteins to anchor host thrombospondin or a parasite analog in a binding complex with the endothelial cell receptor. In Plasmodium falciparum, this protein is Knob-associated histidine-rich protein.